Here is a 229-residue protein sequence, read N- to C-terminus: Translation initiation factor 6 (229 aa).

It belongs to the eIF-6 family.

Binds to the 50S ribosomal subunit and prevents its association with the 30S ribosomal subunit to form the 70S initiation complex. This is Translation initiation factor 6 from Thermococcus kodakarensis (strain ATCC BAA-918 / JCM 12380 / KOD1) (Pyrococcus kodakaraensis (strain KOD1)).